A 2167-amino-acid polypeptide reads, in one-letter code: Beige protein homolog 1 (2167 aa).

The 132-residue stretch at 1368-1499 (KDNDSIATIW…VRDDVLRVLN (132 aa)) folds into the BEACH-type PH domain. In terms of domain architecture, BEACH spans 1545–1839 (SANNSLIDGF…QIFQEPHPEK (295 aa)). Residue K1667 forms a Glycyl lysine isopeptide (Lys-Gly) (interchain with G-Cter in ubiquitin) linkage. 5 WD repeats span residues 1927 to 1965 (THMA…HSVS), 1976 to 2015 (GHLC…LVRQ), 2017 to 2054 (TNDA…YTSK), 2072 to 2111 (KLDA…HNEW), and 2129 to 2167 (SIKG…AIWY).

The protein localises to the cytoplasm. It is found in the membrane. May be involved in protein sorting and cell wall formation. The chain is Beige protein homolog 1 (BPH1) from Saccharomyces cerevisiae (strain ATCC 204508 / S288c) (Baker's yeast).